Reading from the N-terminus, the 131-residue chain is Interleukin-13 (131 aa).

The signal sequence occupies residues 1–18 (MALWVTAVLALACLGGLA). N-linked (GlcNAc...) asparagine glycosylation is found at Asn42, Asn52, and Asn75. Disulfide bonds link Cys51/Cys79 and Cys67/Cys93.

This sequence belongs to the IL-4/IL-13 family. Interacts with IL13RA2.

The protein resides in the secreted. In terms of biological role, cytokine that plays important roles in allergic inflammation and immune response to parasite infection. Synergizes with IL2 in regulating interferon-gamma synthesis. Stimulates B-cell proliferation, and activation of eosinophils, basophils, and mast cells. Plays an important role in controlling IL33 activity by modulating the production of transmembrane and soluble forms of interleukin-1 receptor-like 1/IL1RL1. Displays the capacity to antagonize Th1-driven proinflammatory immune response and downregulates synthesis of many proinflammatory cytokines including IL1, IL6, IL10, IL12 and TNF-alpha through a mechanism that partially involves suppression of NF-kappa-B. Also functions on nonhematopoietic cells, including endothelial cells where it induces vascular cell adhesion protein 1/VCAM1, which is important in the recruitment of eosinophils. Exerts its biological effects through its receptors which comprises the IL4R chain and the IL13RA1 chain, to activate JAK1 and TYK2, leading to the activation of STAT6. Aside from IL13RA1, another receptor IL13RA2 acts as a high affinity decoy for IL13 and mediates internalization and depletion of extracellular IL13. The polypeptide is Interleukin-13 (Il13) (Mus musculus (Mouse)).